We begin with the raw amino-acid sequence, 1771 residues long: Replicase polyprotein (1771 aa).

Residues 1–29 (MSFQQTNNNATNNINSLEELAAQELIAAQ) are a coiled coil. The interval 16–25 (SLEELAAQEL) is BC-box. Positions 106–114 (PEHRYGSTF) are interaction with and inhibition of host AGO2. In terms of domain architecture, SF3 helicase spans 482–656 (AKSLYEQVLL…QEKSIWVRNA (175 aa)). Residue 510-517 (GESGIGKT) participates in ATP binding. The interval 919–942 (VEVGSSGDSKTQKQRNTKVEVGKE) is disordered. Positions 954–1201 (DPAAHALVLD…YACPLTQEAI (248 aa)) constitute a Peptidase C3 domain. Residues H1003, D1063, and C1162 each act as for picornain 3C-like protease activity in the active site. Residues 1385-1413 (GEQYDFTSQRAQELRRDVEELIDNCAKGI) adopt a coiled-coil conformation. The RdRp catalytic domain maps to 1495-1634 (NKVIAGDFGN…NISDRVVEWF (140 aa)).

Interacts with host AGO2; this interaction leads to AGO2 degradation via an E3 ubiquitin ligase-dependent pathway and may block the RNA-induced silencing complexes (RISC) activity. In terms of processing, might be expressed through a ribosomal skip from one codon to the next without formation of a peptide bond.

It localises to the host cytoplasm. The protein resides in the host perinuclear region. The enzyme catalyses RNA(n) + a ribonucleoside 5'-triphosphate = RNA(n+1) + diphosphate. Functionally, suppressor of RNA-mediated gene silencing, an antiviral defense mechanism of insect cells. Inhibits siRNA function through the direct enzymatic inactivation of host AGO2, but does not interfere with miRNA pathway. Facilitates viral replication via the recruitment of a cellular ubiquitin ligase complex that promotes host AGO2 degradation. Inhibits the integrated stress response (ISR) in the infected cell possiby by degrading host Nup358. Stress granule formation is thus inhibited, which allows protein synthesis and viral replication. Does not bind to dsRNA or siRNA. Replicates the genomic and antigenomic RNA. The sequence is that of Replicase polyprotein from Teleogryllus oceanicus (black field cricket).